The chain runs to 342 residues: Ribosomal RNA small subunit methyltransferase H (342 aa).

S-adenosyl-L-methionine is bound by residues 36-38, Asp56, Phe82, Asp100, and Gln107; that span reads GGH. The interval 309 to 342 is disordered; that stretch reads ENRESGMGKGHGAAASRFPTPDSRFPTSPNGDAP. Residues 333 to 342 are compositionally biased toward polar residues; sequence FPTSPNGDAP.

The protein belongs to the methyltransferase superfamily. RsmH family.

It is found in the cytoplasm. The catalysed reaction is cytidine(1402) in 16S rRNA + S-adenosyl-L-methionine = N(4)-methylcytidine(1402) in 16S rRNA + S-adenosyl-L-homocysteine + H(+). Functionally, specifically methylates the N4 position of cytidine in position 1402 (C1402) of 16S rRNA. The protein is Ribosomal RNA small subunit methyltransferase H of Xanthomonas campestris pv. campestris (strain 8004).